Here is a 181-residue protein sequence, read N- to C-terminus: Adenine phosphoribosyltransferase (181 aa).

The protein belongs to the purine/pyrimidine phosphoribosyltransferase family. Homodimer.

The protein resides in the cytoplasm. The catalysed reaction is AMP + diphosphate = 5-phospho-alpha-D-ribose 1-diphosphate + adenine. Its pathway is purine metabolism; AMP biosynthesis via salvage pathway; AMP from adenine: step 1/1. In terms of biological role, catalyzes a salvage reaction resulting in the formation of AMP, that is energically less costly than de novo synthesis. This is Adenine phosphoribosyltransferase from Methylorubrum populi (strain ATCC BAA-705 / NCIMB 13946 / BJ001) (Methylobacterium populi).